The primary structure comprises 138 residues: Small ribosomal subunit protein bS6 (138 aa).

Residues 94 to 138 (VKQDGPLPTPKPTSKEDETEKEEVKPTEDKTESPAQEEKKEDSKE) form a disordered region. Basic and acidic residues predominate over residues 106 to 138 (TSKEDETEKEEVKPTEDKTESPAQEEKKEDSKE).

Belongs to the bacterial ribosomal protein bS6 family.

Binds together with bS18 to 16S ribosomal RNA. This is Small ribosomal subunit protein bS6 from Prochlorococcus marinus (strain NATL1A).